Here is a 72-residue protein sequence, read N- to C-terminus: uncharacterized protein (72 aa).

Residues 15-62 form a disordered region; that stretch reads NNNYNNNNNNNNNNNNNNNNNNNNNNNNNNININNNNNNNNNNNNNNN.

This is an uncharacterized protein from Dictyostelium discoideum (Social amoeba).